Consider the following 929-residue polypeptide: Dual specificity protein phosphatase PHS1 (929 aa).

Disordered regions lie at residues 1 to 27 and 545 to 618; these read MAEPEKKRDQPFSQEKDEEKDLYLVHD and PESP…SLSS. Composition is skewed to basic and acidic residues over residues 552 to 580 and 591 to 606; these read HGHEVNHYPSPSKDRVPSDNSSDHSESDM and ENKEDGSSPKSRESWH. Residues 703–848 form the Tyrosine-protein phosphatase domain; it reads KPSMIQENLF…LINLDKKCHG (146 aa). Cys792 serves as the catalytic Phosphocysteine intermediate. 792-798 contributes to the substrate binding site; that stretch reads CFEGRSR. A Nuclear export signal motif is present at residues 903–911; sequence QKALEALKL.

Interacts with MPK18. Expressed in roots, leaves and flowers.

It localises to the cytoplasm. It carries out the reaction O-phospho-L-seryl-[protein] + H2O = L-seryl-[protein] + phosphate. The catalysed reaction is O-phospho-L-threonyl-[protein] + H2O = L-threonyl-[protein] + phosphate. The enzyme catalyses O-phospho-L-tyrosyl-[protein] + H2O = L-tyrosyl-[protein] + phosphate. Probable dual specificity phosphatase that binds and dephosphorylates MPK18, modulating the organization and dynamics of cortical microtubules. Acts as a negative regulator of abscisic acid (ABA) signaling during seed germination and light-induced stomata aperture. This is Dual specificity protein phosphatase PHS1 (PHS1) from Arabidopsis thaliana (Mouse-ear cress).